The primary structure comprises 283 residues: Protease HtpX (283 aa).

A run of 2 helical transmembrane segments spans residues 4–24 and 33–53; these read ILLF…ILSV and GGIL…SLFL. His139 provides a ligand contact to Zn(2+). Residue Glu140 is part of the active site. His143 serves as a coordination point for Zn(2+). The next 2 membrane-spanning stretches (helical) occupy residues 147–167 and 190–210; these read GDMV…IFLS and IYFL…SIIA. Glu218 is a binding site for Zn(2+).

The protein belongs to the peptidase M48B family. Zn(2+) is required as a cofactor.

The protein localises to the cell inner membrane. The polypeptide is Protease HtpX (Haemophilus influenzae (strain PittEE)).